Consider the following 570-residue polypeptide: Glycine--tRNA ligase (570 aa).

Residues Arg99 and Glu165 each contribute to the substrate site. Residues 197 to 199, 207 to 212, 324 to 325, and 443 to 446 contribute to the ATP site; these read RNE, LRLREF, EC, and GIDR. 212 to 216 contacts substrate; that stretch reads FTQAE. 439-443 provides a ligand contact to substrate; it reads EPSFG.

It belongs to the class-II aminoacyl-tRNA synthetase family.

The protein resides in the cytoplasm. It catalyses the reaction tRNA(Gly) + glycine + ATP = glycyl-tRNA(Gly) + AMP + diphosphate. Catalyzes the attachment of glycine to tRNA(Gly). The polypeptide is Glycine--tRNA ligase (Thermococcus kodakarensis (strain ATCC BAA-918 / JCM 12380 / KOD1) (Pyrococcus kodakaraensis (strain KOD1))).